The primary structure comprises 2467 residues: Polyprotein P1234 (2467 aa).

The region spanning 27-258 (ESQQVTPNDH…ESRKLLRSWH (232 aa)) is the Alphavirus-like MT domain. The nsP1 membrane-binding stretch occupies residues 243–262 (GSTLYTESRKLLRSWHLPSV). 2 S-palmitoyl cysteine; by host lipidation sites follow: Cys416 and Cys418. In terms of domain architecture, (+)RNA virus helicase ATP-binding spans 689–841 (DLINPPFHEF…HNICTRVLHK (153 aa)). 720–727 (GVPGSGKS) contributes to the a ribonucleoside 5'-triphosphate binding site. The (+)RNA virus helicase C-terminal domain occupies 842-990 (SISRRCTLPV…LEEWHEEHDG (149 aa)). A Peptidase C9 domain is found at 1003-1325 (DPFQNKAKVC…QKLSSMYACN (323 aa)). Positions 1004–1023 (PFQNKAKVCWAKCLVQVLET) are nucleolus localization signal. Catalysis depends on Cys1012, which acts as the For cysteine protease nsP2 activity. The short motif at 1056–1065 (TRYYGVDLDS) is the Nuclear export signal element. Residue His1081 is the For cysteine protease nsP2 activity of the active site. Residues 1180-1184 (PHKRV) carry the Nuclear localization signal motif. The Macro domain occupies 1333–1492 (APSYRVRRAD…KIQEAIDRRT (160 aa)). The ADP-D-ribose site is built by Asp1342, Asn1356, Gly1364, Gly1444, and Phe1446. Positions 1594, 1596, 1619, and 1637 each coordinate Zn(2+). The tract at residues 1768 to 1803 (KVATEPPLEPEAPIPAPRKRRTTSTSPPHNPEDFVP) is disordered. Residues 1774–1783 (PLEPEAPIPA) show a composition bias toward pro residues. 2 consecutive short sequence motifs (FGDF; binding to host G3BP1) follow at residues 1820–1823 (FGDL) and 1841–1844 (FGDI). In terms of domain architecture, RdRp catalytic spans 2221–2336 (DAVLETDIAS…HGVRSDPLMA (116 aa)).

Interacts with non-structural protein 3. Interacts with RNA-directed RNA polymerase nsP4. Interacts with protease nsP2. interacts with itself. As to quaternary structure, interacts with mRNA-capping enzyme nsP1. Interacts with host DDX1. Interacts with host DDX3. Interacts (via C-terminus) with host G3BP1; this interaction inhibits the formation of host stress granules on viral mRNAs and the nsp3-G3BP1 complexes bind viral RNAs and probably orchestrate the assembly of viral replication complexes. Interacts (via C-terminus) with host G3BP2; this interaction inhibits the formation of host stress granules on viral mRNAs and the nsp3-G3BP2 complexes bind viral RNAs and probably orchestrate the assembly of viral replication complexes. In terms of assembly, interacts with mRNA-capping enzyme nsP1. Interacts with protease nsP2. interacts with itself. Interacts with RNA-directed RNA polymerase nsP4. Interacts with mRNA-capping enzyme nsP1. Interacts with KPNA1/karyopherin-alpha1; this interaction probably allows the active transport of protease nsP2 into the host nucleus. The cofactor is Mg(2+). Mn(2+) serves as cofactor. Specific enzymatic cleavages in vivo yield mature proteins. The processing of the polyprotein is temporally regulated. In early stages (1.7 hpi), P1234 is first cleaved in trans through its nsP2 protease activity, releasing P123' and nsP4, which associate to form the early replication complex. At the same time, P1234 is also cut at the nsP1/nsP2 site early in infection but with lower efficiency. After replication of the viral minus-strand RNAs (4 hpi), the polyproteins are cut at the nsP1/nsP2 and nsP2/nsP3 sites very efficiently, preventing accumulation of P123' and P1234 and allowing the formation of the late replication complex. NsP3'/nsP4 site is not cleaved anymore and P34 is produced rather than nsP4. Post-translationally, specific enzymatic cleavages in vivo yield mature proteins. The processing of the polyprotein is temporally regulated. In early stages (1.7 hpi), P123 is cleaved at the nsP1/nsP2 site with low efficiency. After replication of the viral minus-strand RNAs (4 hpi), the polyproteins are cut at the nsP1/nsP2 and nsP2/nsP3 sites very efficiently, preventing accumulation of P123 and allowing the formation of the late replication complex. In terms of processing, palmitoylated by host palmitoyltransferases ZDHHC2 and ZDHHC19. Phosphorylated by host on serines and threonines. Post-translationally, ubiquitinated; targets the protein for rapid degradation via the ubiquitin system. Nsp4 is present in extremely low quantities due to low frequency of translation through the amber stop-codon and the degradation by the ubiquitin pathway.

The protein localises to the host cytoplasmic vesicle membrane. Its subcellular location is the host cell membrane. It is found in the host cell projection. The protein resides in the host filopodium. It localises to the host nucleus. The protein localises to the host cytoplasm. It catalyses the reaction GTP + S-adenosyl-L-methionine = N(7)-methyl-GTP + S-adenosyl-L-homocysteine. The catalysed reaction is N(7)-methyl-GTP + L-histidyl-[protein] = N(tele)-(N(7)-methylguanosine 5'-phospho)-L-histidyl-[protein] + diphosphate. It carries out the reaction N(tele)-(N(7)-methylguanosine 5'-phospho)-L-histidyl-[protein] + a 5'-end diphospho-(purine-ribonucleoside) in mRNA + H(+) = a 5'-end (N(7)-methyl 5'-triphosphoguanosine)-(purine-ribonucleoside) in mRNA + L-histidyl-[protein]. The enzyme catalyses a 5'-end triphospho-ribonucleoside in mRNA + H2O = a 5'-end diphospho-ribonucleoside in mRNA + phosphate + H(+). It catalyses the reaction a ribonucleoside 5'-triphosphate + H2O = a ribonucleoside 5'-diphosphate + phosphate + H(+). The catalysed reaction is ATP + H2O = ADP + phosphate + H(+). It carries out the reaction RNA(n) + a ribonucleoside 5'-triphosphate = RNA(n+1) + diphosphate. The enzyme catalyses RNA(n) + ATP = RNA(n)-3'-adenine ribonucleotide + diphosphate. It catalyses the reaction 4-O-(ADP-D-ribosyl)-L-aspartyl-[protein] + H2O = L-aspartyl-[protein] + ADP-D-ribose + H(+). The catalysed reaction is 5-O-(ADP-D-ribosyl)-L-glutamyl-[protein] + H2O = L-glutamyl-[protein] + ADP-D-ribose + H(+). It carries out the reaction ADP-alpha-D-ribose 1''-phosphate + H2O = ADP-D-ribose + phosphate. Its function is as follows. Inactive precursor of the viral replicase, which is activated by cleavages carried out by the viral protease nsP2. In terms of biological role, the early replication complex formed by the polyprotein P123 and nsP4 synthesizes minus-strand RNAs. As soon P123 is cleaved into mature proteins, the plus-strand RNAs synthesis begins. The early replication complex formed by the polyprotein P123' and nsP4 synthesizes minus-strand RNAs. Polyprotein P123' is a short-lived polyprotein that accumulates during early stage of infection. As soon P123' is cleaved into mature proteins, the plus-strand RNAs synthesis begins. Functionally, cytoplasmic capping enzyme that catalyzes two virus-specific reactions: methyltransferase and nsP1 guanylyltransferase. mRNA-capping is necessary since all viral RNAs are synthesized in the cytoplasm, and host capping enzymes are restricted to the nucleus. The enzymatic reaction involves a covalent link between 7-methyl-GMP and nsP1, whereas eukaryotic capping enzymes form a covalent complex only with GMP. nsP1 capping consists in the following reactions: GTP is first methylated into 7-methyl-GMP and then is covalently linked to nsP1 to form the m7GMp-nsP1 complex from which 7-methyl-GMP complex is transferred to the mRNA to create the cap structure. NsP1 is needed for the initiation of the minus-strand RNAs synthesis. Probably serves as a membrane anchor for the replication complex composed of nsP1-nsP4. Palmitoylated nsP1 is remodeling host cell cytoskeleton, and induces filopodium-like structure formation at the surface of the host cell. Its function is as follows. Multifunctional protein whose N-terminus is part of the RNA polymerase complex and displays NTPase, RNA triphosphatase and helicase activities. NTPase and RNA triphosphatase are involved in viral RNA capping and helicase keeps a check on the dsRNA replication intermediates. The C-terminus harbors a protease that specifically cleaves the polyproteins and releases the mature proteins. Required for the shutoff of minus-strand RNAs synthesis. Specifically inhibits the host IFN response by promoting the nuclear export of host STAT1. Also inhibits host transcription by inducing rapid proteasome-dependent degradation of POLR2A, a catalytic subunit of the RNAPII complex. The resulting inhibition of cellular protein synthesis serves to ensure maximal viral gene expression and to evade host immune response. In terms of biological role, seems to be essential for minus-strand RNAs and subgenomic 26S mRNAs synthesis. Displays mono-ADP-ribosylhydrolase activity. ADP-ribosylation is a post-translational modification that controls various processes of the host cell and the virus probably needs to revert it for optimal viral replication. Binds proteins of FXR family and sequesters them into the viral RNA replication complexes thereby inhibiting the formation of host stress granules on viral mRNAs. The nsp3'-FXR complexes bind viral RNAs and probably orchestrate the assembly of viral replication complexes, thanks to the ability of FXR family members to self-assemble and bind DNA. Seems to be essential for minus-strand RNAs and subgenomic 26S mRNAs synthesis. Displays mono-ADP-ribosylhydrolase activity. ADP-ribosylation is a post-translantional modification that controls various processes of the host cell and the virus probably needs to revert it for optimal viral replication. Binds proteins of G3BP family and sequesters them into the viral RNA replication complexes thereby inhibiting the formation of host stress granules on viral mRNAs. The nsp3-G3BP complexes bind viral RNAs and probably orchestrate the assembly of viral replication complexes, thanks to the ability of G3BP family members to self-assemble and bind DNA. Functionally, RNA dependent RNA polymerase. Replicates genomic and antigenomic RNA by recognizing replications specific signals. The early replication complex formed by the polyprotein P123 and nsP4 synthesizes minus-strand RNAs. The late replication complex composed of fully processed nsP1-nsP4 is responsible for the production of genomic and subgenomic plus-strand RNAs. The core catalytic domain of nsP4 also possesses terminal adenylyltransferase (TATase) activity that is probably involved in maintenance and repair of the poly(A) tail, an element required for replication of the viral genome. The chain is Polyprotein P1234 from Getah virus (GETV).